The chain runs to 485 residues: Cobyric acid synthase (485 aa).

The GATase cobBQ-type domain maps to 248 to 435; that stretch reads RLKVAVAVPP…LHGLFESPAA (188 aa). C329 acts as the Nucleophile in catalysis. Residue H427 is part of the active site.

It belongs to the CobB/CobQ family. CobQ subfamily.

It functions in the pathway cofactor biosynthesis; adenosylcobalamin biosynthesis. Catalyzes amidations at positions B, D, E, and G on adenosylcobyrinic A,C-diamide. NH(2) groups are provided by glutamine, and one molecule of ATP is hydrogenolyzed for each amidation. This chain is Cobyric acid synthase, found in Azotobacter vinelandii (strain DJ / ATCC BAA-1303).